The following is a 29-amino-acid chain: Galanin (29 aa).

An Alanine amide modification is found at Ala29.

Belongs to the galanin family.

It is found in the secreted. Contracts smooth muscle of the gastrointestinal and genitourinary tract, regulates growth hormone release, modulates insulin release, and may be involved in the control of adrenal secretion. The protein is Galanin (gal) of Amia calva (Bowfin).